A 257-amino-acid chain; its full sequence is MDRIIEKLDHGWWIVSHEQKLWLPRGELPYGEATNFDLVGQRALLIGEWEGEPVWLVLQHRRHDMGSVRQVIDQDVGLFQLAGRGVQLAEFYRSHKFCGYCGHPMYPSKTEWAMLCSHCRERYYPQIAPCIIVAIRRADSILLAQHTRHRNGVHTVLAGFVEVGETLEQAVAREVMEESGIKVKNLRYVTSQPWPFPQSLMTAFMAEYDSGEIVIDPKELLEAGWYRYDDLPLLPPPGTVARRLIEDTVAMCRAEYE.

Arg-69 is a substrate binding site. Residues Cys-98 and Cys-101 each coordinate Zn(2+). Glu-111 contributes to the substrate binding site. Residues Cys-116 and Cys-119 each coordinate Zn(2+). Tyr-124 lines the substrate pocket. Residues 125-248 (PQIAPCIIVA…TVARRLIEDT (124 aa)) enclose the Nudix hydrolase domain. Positions 158, 174, and 178 each coordinate a divalent metal cation. The Nudix box signature appears at 159-180 (GFVEVGETLEQAVAREVMEESG). 192–199 (QPWPFPQS) provides a ligand contact to substrate. Glu-219 contributes to the a divalent metal cation binding site. Ala-241 serves as a coordination point for substrate.

Belongs to the Nudix hydrolase family. NudC subfamily. In terms of assembly, homodimer. Mg(2+) serves as cofactor. Requires Mn(2+) as cofactor. The cofactor is Zn(2+).

The enzyme catalyses a 5'-end NAD(+)-phospho-ribonucleoside in mRNA + H2O = a 5'-end phospho-adenosine-phospho-ribonucleoside in mRNA + beta-nicotinamide D-ribonucleotide + 2 H(+). The catalysed reaction is NAD(+) + H2O = beta-nicotinamide D-ribonucleotide + AMP + 2 H(+). It catalyses the reaction NADH + H2O = reduced beta-nicotinamide D-ribonucleotide + AMP + 2 H(+). In terms of biological role, mRNA decapping enzyme that specifically removes the nicotinamide adenine dinucleotide (NAD) cap from a subset of mRNAs by hydrolyzing the diphosphate linkage to produce nicotinamide mononucleotide (NMN) and 5' monophosphate mRNA. The NAD-cap is present at the 5'-end of some mRNAs and stabilizes RNA against 5'-processing. Has preference for mRNAs with a 5'-end purine. Catalyzes the hydrolysis of a broad range of dinucleotide pyrophosphates. This chain is NAD-capped RNA hydrolase NudC, found in Citrobacter koseri (strain ATCC BAA-895 / CDC 4225-83 / SGSC4696).